The following is a 718-amino-acid chain: Quinohemoprotein alcohol dehydrogenase ADH-IIG (718 aa).

An N-terminal signal peptide occupies residues 1 to 29 (MRQTGLASLPLKSLAVAVLLSLAGTPALA). Glu-92 provides a ligand contact to pyrroloquinoline quinone. Residues Cys-138 and Cys-139 are joined by a disulfide bond. Pyrroloquinoline quinone-binding positions include Arg-144, Thr-189, and 205-206 (GA). Glu-207 is a binding site for Ca(2+). Position 264 (Thr-264) interacts with pyrroloquinoline quinone. Ca(2+) is bound by residues Asn-284 and Asp-329. The active-site Proton acceptor is the Asp-329. Position 356 (Lys-356) interacts with pyrroloquinoline quinone. Trp-415 lines the substrate pocket. Residues 419 to 420 (DW) and Ala-571 each bind pyrroloquinoline quinone. The Cytochrome c domain occupies 622–699 (ASIEAGAKLY…QIHQYLIKRA (78 aa)). Heme c contacts are provided by Cys-635, Cys-638, His-639, and Met-676.

Belongs to the bacterial PQQ dehydrogenase family. In terms of assembly, monomer. Pyrroloquinoline quinone serves as cofactor. It depends on Ca(2+) as a cofactor. The cofactor is heme c.

It localises to the periplasm. The catalysed reaction is 2 oxidized [azurin] + a primary alcohol = 2 reduced [azurin] + an aldehyde + 2 H(+). With respect to regulation, exhibits higher affinity for 1-butanol compared to 1,2-propanediol but inhibited by 10 mM 1-butanol. Its function is as follows. Catalyzes the dye-linked oxidation of primary alcohols to the corresponding aldehydes and the (subsequent) oxidation of the aldehydes to carboxylic acids. Active with primary alcohols, glycerol, 1,2-propanediol, 1,3-propanediol but not with methanol or sugar alcohols such as D-sorbitol. In Pseudomonas putida (Arthrobacter siderocapsulatus), this protein is Quinohemoprotein alcohol dehydrogenase ADH-IIG.